Here is a 491-residue protein sequence, read N- to C-terminus: Monothiol glutaredoxin-S11 (491 aa).

Glutaredoxin domains lie at 151–253 (NKRL…NIPL), 287–389 (KERL…GIVA), and 394–491 (EDRL…TLSE). Lysine 411 is a glutathione binding site. Position 419 (cysteine 419) interacts with [2Fe-2S] cluster. Glutathione contacts are provided by residues arginine 448, phenylalanine 460, and 473 to 474 (CD).

Belongs to the glutaredoxin family. CGFS subfamily.

Its subcellular location is the cytoplasm. Functionally, may only reduce GSH-thiol disulfides, but not protein disulfides. This Oryza sativa subsp. japonica (Rice) protein is Monothiol glutaredoxin-S11 (GRXS11).